The following is an 836-amino-acid chain: Subtilisin-like protease PIMMS2 (836 aa).

Catalysis depends on charge relay system residues D155, H222, and S414. The interval 802-836 is disordered; that stretch reads EKKNKYNNSVLKRNEMKSHNNSQKTPKIIPRKYSR.

The protein belongs to the peptidase S8 family.

The protein resides in the cell membrane. It catalyses the reaction Hydrolysis of proteins with broad specificity for peptide bonds, and a preference for a large uncharged residue in P1. Hydrolyzes peptide amides.. Its function is as follows. Probable serine protease which plays a role in ookinete traversal of the mosquito host midgut epithelium. This Plasmodium berghei (strain Anka) protein is Subtilisin-like protease PIMMS2.